The chain runs to 98 residues: MSPIFINITLAFTISLLGMLVYRSHLMASLLCLEGMMMSLFITIALMASNTHSPLINIMPITLLVFAACETAVGLALLVSISNTYGLDYIHNLNLLQC.

The next 3 helical transmembrane spans lie at 1 to 21, 26 to 46, and 61 to 81; these read MSPI…GMLV, LMAS…TIAL, and ITLL…LVSI.

Belongs to the complex I subunit 4L family. In terms of assembly, core subunit of respiratory chain NADH dehydrogenase (Complex I) which is composed of 45 different subunits.

It localises to the mitochondrion inner membrane. The enzyme catalyses a ubiquinone + NADH + 5 H(+)(in) = a ubiquinol + NAD(+) + 4 H(+)(out). Functionally, core subunit of the mitochondrial membrane respiratory chain NADH dehydrogenase (Complex I) which catalyzes electron transfer from NADH through the respiratory chain, using ubiquinone as an electron acceptor. Part of the enzyme membrane arm which is embedded in the lipid bilayer and involved in proton translocation. This chain is NADH-ubiquinone oxidoreductase chain 4L (MT-ND4L), found in Chlorocebus aethiops (Green monkey).